We begin with the raw amino-acid sequence, 238 residues long: Large ribosomal subunit protein uL5c (238 aa).

Belongs to the universal ribosomal protein uL5 family. Part of the 50S ribosomal subunit; contacts the 5S rRNA.

It localises to the plastid. The protein resides in the chloroplast. Its function is as follows. Binds 5S rRNA, forms part of the central protuberance of the 50S subunit. This chain is Large ribosomal subunit protein uL5c (rpl5), found in Trieres chinensis (Marine centric diatom).